A 101-amino-acid chain; its full sequence is uncharacterized protein (101 aa).

This is an uncharacterized protein from Schizosaccharomyces pombe (strain 972 / ATCC 24843) (Fission yeast).